Reading from the N-terminus, the 546-residue chain is ATP synthase F(1) complex catalytic subunit beta, mitochondrial (546 aa).

Residues 1 to 45 constitute a mitochondrion transit peptide; the sequence is MLGFVGRVAATSASGALRGLGPSPLPQVKVLLRASPAALQSARDY. 3 positions are modified to N6-acetyllysine; alternate: Lys123, Lys132, and Lys160. N6-succinyllysine; alternate is present on residues Lys123, Lys132, and Lys160. At Lys197 the chain carries N6-acetyllysine. 6 residues coordinate ADP: Gly208, Val209, Gly210, Lys211, Thr212, and Val213. Gly208 contacts ATP. Residues Gly208, Val209, Gly210, Lys211, and Thr212 each contribute to the phosphate site. The ATP site is built by Gly210, Lys211, Thr212, and Val213. Thr212 contacts Mg(2+). A Mg(2+)-binding site is contributed by Glu237. Arg238 lines the ATP pocket. Residues Lys258 and Lys263 each carry the N6-acetyllysine; alternate modification. 2 positions are modified to N6-succinyllysine; alternate: Lys258 and Lys263. Thr311 carries the phosphothreonine modification. At Lys425 the chain carries N6-acetyllysine. Phosphoserine is present on Ser432. N6-acetyllysine is present on residues Lys479 and Lys484. Position 521 is an N6-acetyllysine; alternate (Lys521). Residue Lys521 is modified to N6-succinyllysine; alternate. The interval 521-546 is disordered; that stretch reads KLAEEHSATQTSPSPKGAAAXXXRVV.

This sequence belongs to the ATPase alpha/beta chains family. In terms of assembly, homotrimer. Component of the ATP synthase complex composed at least of ATP5F1A/subunit alpha, ATP5F1B/subunit beta, ATP5MC1/subunit c (homooctomer), MT-ATP6/subunit a, MT-ATP8/subunit 8, ATP5ME/subunit e, ATP5MF/subunit f, ATP5MG/subunit g, ATP5MK/subunit k, ATP5MJ/subunit j, ATP5F1C/subunit gamma, ATP5F1D/subunit delta, ATP5F1E/subunit epsilon, ATP5PF/subunit F6, ATP5PB/subunit b, ATP5PD/subunit d, ATP5PO/subunit OSCP. ATP synthase complex consists of a soluble F(1) head domain (subunits alpha(3) and beta(3)) - the catalytic core - and a membrane F(0) domain - the membrane proton channel (subunits c, a, 8, e, f, g, k and j). These two domains are linked by a central stalk (subunits gamma, delta, and epsilon) rotating inside the F1 region and a stationary peripheral stalk (subunits F6, b, d, and OSCP). Interacts with PPIF. Interacts with BCL2L1 isoform BCL-X(L); the interaction mediates the association of BCL2L1 isoform BCL-X(L) with the mitochondrial membrane F(1)F(0) ATP synthase and enhances neurons metabolic efficiency. Interacts with CLN5 and PPT1. Interacts with S100A1; this interaction increases F1-ATPase activity. Interacts with MTLN. Interacts with TTC5/STRAP; the interaction results in decreased mitochondrial ATP production.

Its subcellular location is the mitochondrion inner membrane. It carries out the reaction ATP + H2O + 4 H(+)(in) = ADP + phosphate + 5 H(+)(out). In terms of biological role, catalytic subunit beta, of the mitochondrial membrane ATP synthase complex (F(1)F(0) ATP synthase or Complex V) that produces ATP from ADP in the presence of a proton gradient across the membrane which is generated by electron transport complexes of the respiratory chain. ATP synthase complex consist of a soluble F(1) head domain - the catalytic core - and a membrane F(1) domain - the membrane proton channel. These two domains are linked by a central stalk rotating inside the F(1) region and a stationary peripheral stalk. During catalysis, ATP synthesis in the catalytic domain of F(1) is coupled via a rotary mechanism of the central stalk subunits to proton translocation. In vivo, can only synthesize ATP although its ATP hydrolase activity can be activated artificially in vitro. With the subunit alpha (ATP5F1A), forms the catalytic core in the F(1) domain. The polypeptide is ATP synthase F(1) complex catalytic subunit beta, mitochondrial (Canis lupus familiaris (Dog)).